Here is an 81-residue protein sequence, read N- to C-terminus: ATP synthase subunit c (81 aa).

2 helical membrane-spanning segments follow: residues 5 to 25 (IAAGALIGGGLIMAGGAIGAG) and 57 to 77 (VGLVEAAYFINLAFMALFVFA).

This sequence belongs to the ATPase C chain family. As to quaternary structure, F-type ATPases have 2 components, F(1) - the catalytic core - and F(0) - the membrane proton channel. F(1) has five subunits: alpha(3), beta(3), gamma(1), delta(1), epsilon(1). F(0) has three main subunits: a(1), b(2) and c(10-14). The alpha and beta chains form an alternating ring which encloses part of the gamma chain. F(1) is attached to F(0) by a central stalk formed by the gamma and epsilon chains, while a peripheral stalk is formed by the delta and b chains.

It is found in the cell membrane. F(1)F(0) ATP synthase produces ATP from ADP in the presence of a proton or sodium gradient. F-type ATPases consist of two structural domains, F(1) containing the extramembraneous catalytic core and F(0) containing the membrane proton channel, linked together by a central stalk and a peripheral stalk. During catalysis, ATP synthesis in the catalytic domain of F(1) is coupled via a rotary mechanism of the central stalk subunits to proton translocation. Its function is as follows. Key component of the F(0) channel; it plays a direct role in translocation across the membrane. A homomeric c-ring of between 10-14 subunits forms the central stalk rotor element with the F(1) delta and epsilon subunits. This chain is ATP synthase subunit c, found in Mycolicibacterium gilvum (strain PYR-GCK) (Mycobacterium gilvum (strain PYR-GCK)).